A 235-amino-acid chain; its full sequence is Enolase-phosphatase E1 (235 aa).

Mg(2+)-binding residues include aspartate 10 and glutamate 12. Substrate contacts are provided by residues 130–131 and lysine 169; that span reads SS. Residue aspartate 194 participates in Mg(2+) binding.

The protein belongs to the HAD-like hydrolase superfamily. MasA/MtnC family. In terms of assembly, monomer. Mg(2+) serves as cofactor.

It localises to the cytoplasm. The protein resides in the nucleus. The enzyme catalyses 5-methylsulfanyl-2,3-dioxopentyl phosphate + H2O = 1,2-dihydroxy-5-(methylsulfanyl)pent-1-en-3-one + phosphate. It functions in the pathway amino-acid biosynthesis; L-methionine biosynthesis via salvage pathway; L-methionine from S-methyl-5-thio-alpha-D-ribose 1-phosphate: step 3/6. Its pathway is amino-acid biosynthesis; L-methionine biosynthesis via salvage pathway; L-methionine from S-methyl-5-thio-alpha-D-ribose 1-phosphate: step 4/6. Functionally, bifunctional enzyme that catalyzes the enolization of 2,3-diketo-5-methylthiopentyl-1-phosphate (DK-MTP-1-P) into the intermediate 2-hydroxy-3-keto-5-methylthiopentenyl-1-phosphate (HK-MTPenyl-1-P), which is then dephosphorylated to form the acireductone 1,2-dihydroxy-3-keto-5-methylthiopentene (DHK-MTPene). The chain is Enolase-phosphatase E1 from Komagataella phaffii (strain GS115 / ATCC 20864) (Yeast).